A 186-amino-acid polypeptide reads, in one-letter code: Large ribosomal subunit protein uL5 (186 aa).

Belongs to the universal ribosomal protein uL5 family. In terms of assembly, part of the 50S ribosomal subunit; contacts the 5S rRNA and probably tRNA. Forms a bridge to the 30S subunit in the 70S ribosome.

In terms of biological role, this is one of the proteins that bind and probably mediate the attachment of the 5S RNA into the large ribosomal subunit, where it forms part of the central protuberance. In the 70S ribosome it contacts protein S13 of the 30S subunit (bridge B1b), connecting the 2 subunits; this bridge is implicated in subunit movement. May contact the P site tRNA; the 5S rRNA and some of its associated proteins might help stabilize positioning of ribosome-bound tRNAs. This Methanopyrus kandleri (strain AV19 / DSM 6324 / JCM 9639 / NBRC 100938) protein is Large ribosomal subunit protein uL5.